A 388-amino-acid chain; its full sequence is Serpin B11 (388 aa).

The RCL stretch occupies residues 338–362 (EEGTEAAAATGESISVKRLPVTVQF).

This sequence belongs to the serpin family. Ov-serpin subfamily. In terms of tissue distribution, expressed in eye, lung, lymphocytes, thymus, stomach, uterus, heart, brain, liver, skeletal muscle, and in day 7, 15, and 17 embryos.

It localises to the cytoplasm. Inhibitor of serine proteases. Has moderate inhibitory activity for trypsin-like peptidases, but also some activity with cysteine peptidases, cathepsin L, K, and V, and the serine peptidase, tryptase gamma. This is Serpin B11 (Serpinb11) from Mus musculus (Mouse).